The primary structure comprises 354 residues: Probable calcium-binding protein CML50 (354 aa).

2 stretches are compositionally biased toward low complexity: residues Met-1–Gly-10 and Tyr-28–Gly-71. The segment at Met-1–Tyr-159 is disordered. The segment covering Ala-72–Pro-81 has biased composition (pro residues). Low complexity predominate over residues Gly-106 to Pro-117. EF-hand domains are found at residues Gly-183 to Arg-218 and Tyr-249 to Ser-284. Ca(2+) is bound by residues Asp-196, Asp-198, Ser-200, Glu-207, Asp-262, Asp-264, Ser-266, Arg-268, and Glu-273.

Its function is as follows. Potential calcium sensor. The sequence is that of Probable calcium-binding protein CML50 (CML50) from Arabidopsis thaliana (Mouse-ear cress).